Here is a 222-residue protein sequence, read N- to C-terminus: Cytidylate kinase (222 aa).

Position 9 to 17 (9 to 17 (GPSGAGKST)) interacts with ATP.

It belongs to the cytidylate kinase family. Type 1 subfamily.

The protein localises to the cytoplasm. It carries out the reaction CMP + ATP = CDP + ADP. It catalyses the reaction dCMP + ATP = dCDP + ADP. The polypeptide is Cytidylate kinase (Thermodesulfovibrio yellowstonii (strain ATCC 51303 / DSM 11347 / YP87)).